A 309-amino-acid chain; its full sequence is Taste receptor type 2 member 8 (309 aa).

Topologically, residues 1 to 7 (MFSPADN) are extracellular. The chain crosses the membrane as a helical span at residues 8–28 (IFIILITGEFIIGILGNGYIG). The Cytoplasmic portion of the chain corresponds to 29–50 (LVNWIDWIKKKKISTIDCILTN). A helical transmembrane segment spans residues 51-71 (LVISRICLISVMVVNGIVIVL). Residues 72 to 82 (YPDVYTKTKLQ) lie on the Extracellular side of the membrane. Residues 83–103 (IVICTFWTFANYLNMWFTACL) traverse the membrane as a helical segment. The Cytoplasmic segment spans residues 104–131 (NVFYSLKVANSSHPLFLWLKRKIDMVVR). The chain crosses the membrane as a helical span at residues 132–152 (WILLGCFAISLLVSLIIATVL). Topologically, residues 153-184 (SHDYRFHAIAKHKRNVTEMFHVSKMPYFEPLT) are extracellular. N167 is a glycosylation site (N-linked (GlcNAc...) asparagine). The helical transmembrane segment at 185–205 (LFNLLAIVPFIVSLMSFFLLV) threads the bilayer. At 206–239 (RSLWRHTKQIKLYATGGRDPSTEAHVRAIKTMTL) the chain is on the cytoplasmic side. Residues 240 to 260 (LIFFFFLYYITSLLVXFSYLI) traverse the membrane as a helical segment. Residues 261–266 (TNYKLA) lie on the Extracellular side of the membrane. A helical transmembrane segment spans residues 267 to 287 (MAFGEIVAILYPSGHSLILII). The Cytoplasmic segment spans residues 288 to 309 (LNNKLRQASVRMLTCRKIACVT).

Belongs to the G-protein coupled receptor T2R family.

It localises to the membrane. Receptor that may play a role in the perception of bitterness and is gustducin-linked. May play a role in sensing the chemical composition of the gastrointestinal content. The activity of this receptor may stimulate alpha gustducin, mediate PLC-beta-2 activation and lead to the gating of TRPM5. This chain is Taste receptor type 2 member 8 (TAS2R8), found in Papio hamadryas (Hamadryas baboon).